The sequence spans 471 residues: Cysteine--tRNA ligase (471 aa).

Position 29 (Cys29) interacts with Zn(2+). The 'HIGH' region signature appears at 31-41 (PTVYNYIHIGN). Residues Cys209, His234, and Glu238 each coordinate Zn(2+). Residues 266-270 (KMSKS) carry the 'KMSKS' region motif. Lys269 lines the ATP pocket.

The protein belongs to the class-I aminoacyl-tRNA synthetase family. Monomer. Requires Zn(2+) as cofactor.

Its subcellular location is the cytoplasm. It catalyses the reaction tRNA(Cys) + L-cysteine + ATP = L-cysteinyl-tRNA(Cys) + AMP + diphosphate. This is Cysteine--tRNA ligase from Listeria monocytogenes serovar 1/2a (strain ATCC BAA-679 / EGD-e).